Reading from the N-terminus, the 324-residue chain is NADH-ubiquinone oxidoreductase chain 1 (324 aa).

9 helical membrane-spanning segments follow: residues 9–29 (ILNPLAFIVPVLLAVAFLTLL), 43–63 (PNIVGPYGLLQPIADGVKLFI), 75–95 (ILFILTPMLALTLAMTLWAPL), 106–126 (LAILLFVALSSLAVYSILGSG), 146–166 (ISYEVSLGLILLSLIIFTGGF), 177–197 (SIWLIIPAWPLAAMWYISTLA), 228–250 (LFFLAEYANILFMNTLSASLFLG), 259–279 (ELTTMNLMTKAAVLSLVFLWV), and 299–319 (FLPLTLALVIWHLALPITFAG).

It belongs to the complex I subunit 1 family.

The protein resides in the mitochondrion inner membrane. It catalyses the reaction a ubiquinone + NADH + 5 H(+)(in) = a ubiquinol + NAD(+) + 4 H(+)(out). In terms of biological role, core subunit of the mitochondrial membrane respiratory chain NADH dehydrogenase (Complex I) that is believed to belong to the minimal assembly required for catalysis. Complex I functions in the transfer of electrons from NADH to the respiratory chain. The immediate electron acceptor for the enzyme is believed to be ubiquinone. This is NADH-ubiquinone oxidoreductase chain 1 (MT-ND1) from Tetraodon nigroviridis (Spotted green pufferfish).